Here is a 691-residue protein sequence, read N- to C-terminus: Elongation factor G (691 aa).

Residues 12-286 enclose the tr-type G domain; it reads KKLRNIGIMA…GILEYLPSPL (275 aa). Residues 21–28, 85–89, and 139–142 contribute to the GTP site; these read AHIDAGKT, DTPGH, and NKMD.

It belongs to the TRAFAC class translation factor GTPase superfamily. Classic translation factor GTPase family. EF-G/EF-2 subfamily.

The protein resides in the cytoplasm. Functionally, catalyzes the GTP-dependent ribosomal translocation step during translation elongation. During this step, the ribosome changes from the pre-translocational (PRE) to the post-translocational (POST) state as the newly formed A-site-bound peptidyl-tRNA and P-site-bound deacylated tRNA move to the P and E sites, respectively. Catalyzes the coordinated movement of the two tRNA molecules, the mRNA and conformational changes in the ribosome. This Thermosipho africanus (strain TCF52B) protein is Elongation factor G.